Consider the following 463-residue polypeptide: L-seryl-tRNA(Sec) selenium transferase (463 aa).

N6-(pyridoxal phosphate)lysine is present on lysine 295.

Belongs to the SelA family. In terms of assembly, homodecamer; pentamer of dimers. Binds only one seryl-tRNA(Sec) per dimer. Pyridoxal 5'-phosphate is required as a cofactor.

It is found in the cytoplasm. It carries out the reaction L-seryl-tRNA(Sec) + selenophosphate + H(+) = L-selenocysteinyl-tRNA(Sec) + phosphate. It participates in aminoacyl-tRNA biosynthesis; selenocysteinyl-tRNA(Sec) biosynthesis; selenocysteinyl-tRNA(Sec) from L-seryl-tRNA(Sec) (bacterial route): step 1/1. Converts seryl-tRNA(Sec) to selenocysteinyl-tRNA(Sec) required for selenoprotein biosynthesis. This Shigella dysenteriae serotype 1 (strain Sd197) protein is L-seryl-tRNA(Sec) selenium transferase.